The chain runs to 360 residues: MTVYNFNAGPAILPPSVLSQAQEELRDFAGTGISVMETSHRAKEFEAVNNEVEARFKALLGIESGYRVLLLQGGASTQFAMIPMNFLGADQVADYIITGTWAEKARDEAQKIGKVHIAATTEAENHNRIPSQTELQFSENPVYVHLTTNNTIYGTQWQSTPETNGVPIVADMSSDIFSRPFDASKFGLVYAGAQKNLGPSGVTVVLIREDWLDKGAKNVPTMLRYSTHAKNNSLYNTPPTFGVYMLNLVLAWIQEQGGLAGMAEYNTRKANVVYNAIDNSGGFYRGHAVADSRSQMNVTFNLPTQELEKQFLAEAKAQGMIGLPGHRSVGGVRASIYNAMSIEGVEALASFMAHFAAKQG.

Residue R41 coordinates L-glutamate. Pyridoxal 5'-phosphate is bound by residues 75-76 (AS), W101, T151, D171, and Q194. Position 195 is an N6-(pyridoxal phosphate)lysine (K195). Position 236–237 (236–237 (NT)) interacts with pyridoxal 5'-phosphate.

It belongs to the class-V pyridoxal-phosphate-dependent aminotransferase family. SerC subfamily. In terms of assembly, homodimer. Requires pyridoxal 5'-phosphate as cofactor.

Its subcellular location is the cytoplasm. It catalyses the reaction O-phospho-L-serine + 2-oxoglutarate = 3-phosphooxypyruvate + L-glutamate. The catalysed reaction is 4-(phosphooxy)-L-threonine + 2-oxoglutarate = (R)-3-hydroxy-2-oxo-4-phosphooxybutanoate + L-glutamate. The protein operates within amino-acid biosynthesis; L-serine biosynthesis; L-serine from 3-phospho-D-glycerate: step 2/3. It functions in the pathway cofactor biosynthesis; pyridoxine 5'-phosphate biosynthesis; pyridoxine 5'-phosphate from D-erythrose 4-phosphate: step 3/5. In terms of biological role, catalyzes the reversible conversion of 3-phosphohydroxypyruvate to phosphoserine and of 3-hydroxy-2-oxo-4-phosphonooxybutanoate to phosphohydroxythreonine. This is Phosphoserine aminotransferase from Herpetosiphon aurantiacus (strain ATCC 23779 / DSM 785 / 114-95).